The following is an 826-amino-acid chain: MFDIPYQVPSRRTFLSLSALSAIAIAASPEMPDAFASPDPDIWSALCEKWTDIITGRNAAKTADPRARAIIAKTDKRVATILTDLASSSSRTTVLLSANLQKEESSFITTTARAISSIACAWATPGSAYHAEPHVLSACIDALKDFCRLRYHPSQDEYGNWWDWEDGASRAIGDVMCILHDALPTDVMAAAAAGIDHFVPDPWYQQPESVKPTAHPTQPVISTGANRMDLTRAVICRSIATGDESKLRHAVQGLPDSWRTVAEGDGFRADGGFIQHSHVPYTGSYGDVLLSGLAMLLPLVAGTRFDITDSAQANLLSQVERGIVPVMYGGQILDCVRGRSISRIDEPAAMHGMSIARSMLLMANAIPAHRAELWRGTVHGWMTRNTFDHLSEPASLRDIDLFDTAANVRPIPESSTPTYFASIDRLVHRTPNWLIAVSNCSNRISWYEYGNSENEWASRTSQGMRYLMLPEDMGQYEDGFWATVDYSAPTGTTVDSTPLKRAVGTAWAERTPDNEWSGGLASGEWSAAASQITSQDSTLKARRLWVGLKDALLELTTDVSTDASKATTVVEHRKVGKTPPELLVDGITITSKTSFDNPHWAHLRGVGGYVFATDVDLTAQLEKRKGSWIDVNPARTVKGFNEAIERNYASLHVTHHNRPVAWAVLPTASRSQTMALAQRPVDNLFIVLSNDRMVQAVRSTGCLLTKDPTVVTTYAFWKPATCAGMTADAPAIIQTQAQGSRVEVIMSEPTQKRPSLTVAIEGVWTVENSSDRISVSRSDKTTTLRINTADLGGQSIRVTLSPALPKPTKPSLRASSYPLGLPHTSS.

A signal peptide (tat-type signal) is located at residues 1-36 (MFDIPYQVPSRRTFLSLSALSAIAIAASPEMPDAFA). Active-site residues include histidine 276, tyrosine 285, and arginine 339. The tract at residues 800 to 826 (LSPALPKPTKPSLRASSYPLGLPHTSS) is disordered.

This sequence belongs to the polysaccharide lyase 8 family. Post-translationally, predicted to be exported by the Tat system. The position of the signal peptide cleavage has not been experimentally proven.

Its subcellular location is the secreted. The enzyme catalyses [hyaluronan](n) = n 3-(4-deoxy-beta-D-gluc-4-enuronosyl)-N-acetyl-D-glucosamine + H2O. Its function is as follows. Degrades hyaluronic acid (HA) into large-sized HA oligosaccharides, including tetrasaccharide HA (HA-4), hexasaccharide HA (HA-6) and higher molecular weight HA, and to a lesser extent into HA disaccharides (HA-2). Involved in the pathogenesis of acne. HA degradation products induce secretion of proinflammatory cytokines (IL-6, IL-8 and TNF-alpha) from human HaCaT keratinocyte cell line and from mouse bone marrow derived macrophages (BMDMs). Produced HA fragments also direct robust TLR2-dependent inflammation in the mouse model of acne. In Cutibacterium acnes (Propionibacterium acnes), this protein is Hyaluronate lyase HylA.